We begin with the raw amino-acid sequence, 1377 residues long: DNA-directed RNA polymerase subunit beta (1377 aa).

This sequence belongs to the RNA polymerase beta chain family. As to quaternary structure, the RNAP catalytic core consists of 2 alpha, 1 beta, 1 beta' and 1 omega subunit. When a sigma factor is associated with the core the holoenzyme is formed, which can initiate transcription.

The catalysed reaction is RNA(n) + a ribonucleoside 5'-triphosphate = RNA(n+1) + diphosphate. In terms of biological role, DNA-dependent RNA polymerase catalyzes the transcription of DNA into RNA using the four ribonucleoside triphosphates as substrates. The chain is DNA-directed RNA polymerase subunit beta from Campylobacter lari (strain RM2100 / D67 / ATCC BAA-1060).